The primary structure comprises 400 residues: Trans-enoyl reductase ucsL (400 aa).

NADP(+) is bound at residue 50–53 (TDHK). 145-152 (SVHGSVAL) is a substrate binding site. Residues 204 to 207 (STAC), 227 to 230 (SPRN), tyrosine 245, and 292 to 293 (LE) each bind NADP(+). Residue 313–317 (GPVMF) participates in substrate binding. 389-390 (VS) is a binding site for NADP(+).

It belongs to the zinc-containing alcohol dehydrogenase family. As to quaternary structure, monomer.

Its pathway is mycotoxin biosynthesis. In terms of biological role, trans-enoyl reductase; part of the gene cluster that mediates the biosynthesis of UCS1025A, a member of the pyrrolizidinone family that acts as a strong telomerase inhibitor and displays potent antibacterial and antitumor properties. These compounds share a hemiaminal-containing pyrrolizidinone core fused with a gamma-lactone, giving a furopyrrolizidine that is connected to a decalin fragment. The polyketide synthase module (PKS) of the PKS-NRPS ucsA is responsible for the synthesis of the polyketide backbone via the condensation of an acetyl-CoA starter unit with 6 malonyl-CoA units. The downstream nonribosomal peptide synthetase (NRPS) module then amidates the carboxyl end of the polyketide with a 2S,3S-methylproline derived from L-isoleucine by the 2-oxoglutarate-dependent dioxygenase ucsF which converts L-isoleucine to (4S,5S)-4-methylpyrroline-5-carboxylate that is further converted to 2S,3S-methylproline by the pyrroline-5-carboxylate reductase ucsG. Reductive release of the completed aminoacyl polyketide from the assembly line can form the 3-pyrrolin-2-one structure via an intramolecular Knoevenagel reaction. Because ucsA lacks a designated enoylreductase (ER) domain, the required activity is provided the enoyl reductase ucsL. This keto acyclic precursor is the substrate of the Diels-Alderase ucsH, that catalyzes the Diels-Alder cycloaddition. Oxidation of the 3S-methyl group to a carboxylate by the cytochrome P450 monooxygenase ucsK allows an oxa-Michael cyclization that might involve the reductase/dehydrogenase ucsI and which furnishes the furopyrrolizidine. The oxidase ucsJ likely plays a critical role in stereoselective reduction of the C5-C6 double bond to afford the required R-configured carboxylate group. Further enolization and oxidation at C5 by an unidentified enzyme affords the last intermediate that can undergo oxa-Michael cyclization to yield UCS1025A. The chain is Trans-enoyl reductase ucsL from Acremonium sp.